The primary structure comprises 670 residues: Methionine--tRNA ligase (670 aa).

Positions 14–24 match the 'HIGH' region motif; sequence PYANGHLHLGH. 4 residues coordinate Zn(2+): Cys145, Cys148, Cys158, and Cys161. The 'KMSKS' region motif lies at 330–334; the sequence is KMSKS. Lys333 contacts ATP. In terms of domain architecture, tRNA-binding spans 570–670; the sequence is DFAKVDLRIA…AGALPGMKVK (101 aa).

Belongs to the class-I aminoacyl-tRNA synthetase family. MetG type 1 subfamily. In terms of assembly, homodimer. Requires Zn(2+) as cofactor.

Its subcellular location is the cytoplasm. It carries out the reaction tRNA(Met) + L-methionine + ATP = L-methionyl-tRNA(Met) + AMP + diphosphate. In terms of biological role, is required not only for elongation of protein synthesis but also for the initiation of all mRNA translation through initiator tRNA(fMet) aminoacylation. The chain is Methionine--tRNA ligase from Legionella pneumophila subsp. pneumophila (strain Philadelphia 1 / ATCC 33152 / DSM 7513).